A 919-amino-acid polypeptide reads, in one-letter code: Sarcosine dehydrogenase, mitochondrial (919 aa).

The N-terminal 22 residues, M1–N22, are a transit peptide targeting the mitochondrion. K38 is modified (N6-succinyllysine). H109 carries the post-translational modification Tele-8alpha-FAD histidine. N6-acetyllysine; alternate is present on K174. The residue at position 174 (K174) is an N6-succinyllysine; alternate. 4 positions are modified to N6-succinyllysine: K278, K378, K392, and K535. N6-acetyllysine is present on residues K560 and K776. Y778 is modified (phosphotyrosine). An N6-acetyllysine; alternate mark is found at K803, K885, and K905. K803, K885, and K905 each carry N6-succinyllysine; alternate.

Belongs to the GcvT family. Requires FAD as cofactor.

Its subcellular location is the mitochondrion matrix. It carries out the reaction (6S)-5,6,7,8-tetrahydrofolyl-(gamma-L-Glu)(n) + sarcosine + oxidized [electron-transfer flavoprotein] + H(+) = (6R)-5,10-methylenetetrahydrofolyl-(gamma-L-Glu)(n) + reduced [electron-transfer flavoprotein] + glycine. It participates in amine and polyamine degradation; sarcosine degradation; formaldehyde and glycine from sarcosine: step 1/1. Its function is as follows. Catalyzes the last step of the oxidative degradation of choline to glycine. Converts sarcosine into glycine. This is Sarcosine dehydrogenase, mitochondrial from Mus musculus (Mouse).